The chain runs to 418 residues: MTIFEELKARGLIFQTTDEEALVKAFEEGPVSFYTGYDPTADSLHLGHLVAILTSRRLQLAGHKPYALVGGATGLIGDPSFNDAERSLQTKETVEGWVEKIQGQLSRFLDFENGDNKAVMVNNYDWFGSVSFIDFLRDVGKYFTVNYMMSKESVKKRIETGISYTEFAYQIMQGYDFYELNAKYGVTLQIGGSDQWGNMTAGTELLRRKADKSGHVITVPLITDSTGKKFGKSEGNAVWLDATKTTPYEMYQFWLNVMDDDAVRFLKIFTFLSLEEIEEIGKEFDQARHQRLAQKVLAREVVTLVHGKEAYEQAVHITEQLFAGNLKALSARDLKVALNGVPTYEISADENLNIVELLVNAKISPSKRQAREDVQNGAIYINGERVQDLDYTLSDTDKIDNEITVIRRGKKKNFVLTY.

Residue Tyr-34 participates in L-tyrosine binding. Positions 39–48 (PTADSLHLGH) match the 'HIGH' region motif. L-tyrosine is bound by residues Tyr-169 and Gln-173. A 'KMSKS' region motif is present at residues 229 to 233 (KFGKS). Lys-232 contributes to the ATP binding site. One can recognise an S4 RNA-binding domain in the interval 352–418 (LNIVELLVNA…GKKKNFVLTY (67 aa)).

Belongs to the class-I aminoacyl-tRNA synthetase family. TyrS type 1 subfamily. As to quaternary structure, homodimer.

It localises to the cytoplasm. It carries out the reaction tRNA(Tyr) + L-tyrosine + ATP = L-tyrosyl-tRNA(Tyr) + AMP + diphosphate + H(+). Catalyzes the attachment of tyrosine to tRNA(Tyr) in a two-step reaction: tyrosine is first activated by ATP to form Tyr-AMP and then transferred to the acceptor end of tRNA(Tyr). The polypeptide is Tyrosine--tRNA ligase (Streptococcus thermophilus (strain ATCC BAA-491 / LMD-9)).